We begin with the raw amino-acid sequence, 429 residues long: Glutamate-1-semialdehyde 2,1-aminomutase 1 (429 aa).

An N6-(pyridoxal phosphate)lysine modification is found at K268.

This sequence belongs to the class-III pyridoxal-phosphate-dependent aminotransferase family. HemL subfamily. In terms of assembly, homodimer. Pyridoxal 5'-phosphate is required as a cofactor.

The protein localises to the cytoplasm. It carries out the reaction (S)-4-amino-5-oxopentanoate = 5-aminolevulinate. Its pathway is porphyrin-containing compound metabolism; protoporphyrin-IX biosynthesis; 5-aminolevulinate from L-glutamyl-tRNA(Glu): step 2/2. The polypeptide is Glutamate-1-semialdehyde 2,1-aminomutase 1 (Staphylococcus saprophyticus subsp. saprophyticus (strain ATCC 15305 / DSM 20229 / NCIMB 8711 / NCTC 7292 / S-41)).